Reading from the N-terminus, the 743-residue chain is ABC-type transporter claG (743 aa).

N4 and N30 each carry an N-linked (GlcNAc...) asparagine glycan. Residues 124–144 (SILLDIFLVIVVSWPFPFAWI) traverse the membrane as a helical segment. N-linked (GlcNAc...) asparagine glycosylation is present at N159. One can recognise an ABC transporter domain in the interval 200 to 439 (VEFSGISMRP…FQDAGYTFPL (240 aa)). 234 to 241 (GPSGSGKS) provides a ligand contact to ATP. The next 5 helical transmembrane spans lie at 507-527 (YPSFVLEILTGAGCGILIGLS), 560-580 (GMLLCLTIGCAAGPAGVKTFG), 611-631 (IFLSALHFTSFYLILTTPIVS), 636-656 (LIVNLLYFYCIYGAASMISAI), and 661-681 (NGPLITMLTSVLFCALSGCAP).

Belongs to the ABC transporter superfamily. ABCG family.

The protein localises to the membrane. Functionally, ABC-type transporter; part of the cla gene cluster that produces clavatol and ortho-quinone methide. The clavatol biosynthesis cluster cla and the terrestric acid cluster tra are both involved in the production of peniphenones and penilactones. The chain is ABC-type transporter claG from Penicillium crustosum (Blue mold fungus).